The chain runs to 180 residues: ATP-dependent protease subunit HslV (180 aa).

Thr-6 is an active-site residue. Residues Ala-164, Cys-167, and Thr-170 each contribute to the Na(+) site.

Belongs to the peptidase T1B family. HslV subfamily. In terms of assembly, a double ring-shaped homohexamer of HslV is capped on each side by a ring-shaped HslU homohexamer. The assembly of the HslU/HslV complex is dependent on binding of ATP.

It localises to the cytoplasm. It carries out the reaction ATP-dependent cleavage of peptide bonds with broad specificity.. With respect to regulation, allosterically activated by HslU binding. Protease subunit of a proteasome-like degradation complex believed to be a general protein degrading machinery. The polypeptide is ATP-dependent protease subunit HslV (Borrelia duttonii (strain Ly)).